The chain runs to 560 residues: MRSDTIKKGFEKAPHRSLLKATGCVSTRDDFSKPFIGICNSFNELIPGHAHLQELGRIAKEAVREAGGVPFEFNTIGVCDGIAMGHVGMRYSLASRELIADSVETVVEAHRLDGLVCIPNCDKITPGMMMGALRTNVPVVFVSGGPMKAGHTPSGKTVDLISVFEAVGKCSTGEITEDELQTVEECGCPGCGSCSGMFTANSMNCLCEALGFALPGNGTILAADPRRNELVKAAAGRIIDLVKKEVRPRQILTRTSMLNAFALDLAMGGSTNTILHTLAIASEAELDFDFSELNDLSAKTPYICKVSPATTEVHIEDVDRAGGISAILKELSKVEGLLDLSAPTVTGKTLGENIASAEVLDRTVIRSVEEPYSTTGGLAVLYGNLAPNGAVVKTGAVSPAMMKHTGPAKVYDCQDDAIAGIMNGDVKSGDVVVIRYEGPRGGPGMPEMLSPTSAIIGRGLGDSVALITDGRFSGGSRGACVGHVSPEAADRGPIAAVQTGDMITIDIPARSMTVALDDETIRQRIEALPKFEPKIKKGYLARYARMVTSANTGAVLKNDF.

A Mg(2+)-binding site is contributed by D80. C121 contributes to the [2Fe-2S] cluster binding site. 2 residues coordinate Mg(2+): D122 and K123. K123 bears the N6-carboxylysine mark. C194 serves as a coordination point for [2Fe-2S] cluster. E447 lines the Mg(2+) pocket. The active-site Proton acceptor is S473.

It belongs to the IlvD/Edd family. In terms of assembly, homodimer. It depends on [2Fe-2S] cluster as a cofactor. Mg(2+) serves as cofactor.

The catalysed reaction is (2R)-2,3-dihydroxy-3-methylbutanoate = 3-methyl-2-oxobutanoate + H2O. It catalyses the reaction (2R,3R)-2,3-dihydroxy-3-methylpentanoate = (S)-3-methyl-2-oxopentanoate + H2O. It participates in amino-acid biosynthesis; L-isoleucine biosynthesis; L-isoleucine from 2-oxobutanoate: step 3/4. The protein operates within amino-acid biosynthesis; L-valine biosynthesis; L-valine from pyruvate: step 3/4. Functionally, functions in the biosynthesis of branched-chain amino acids. Catalyzes the dehydration of (2R,3R)-2,3-dihydroxy-3-methylpentanoate (2,3-dihydroxy-3-methylvalerate) into 2-oxo-3-methylpentanoate (2-oxo-3-methylvalerate) and of (2R)-2,3-dihydroxy-3-methylbutanoate (2,3-dihydroxyisovalerate) into 2-oxo-3-methylbutanoate (2-oxoisovalerate), the penultimate precursor to L-isoleucine and L-valine, respectively. This chain is Dihydroxy-acid dehydratase, found in Chlorobaculum tepidum (strain ATCC 49652 / DSM 12025 / NBRC 103806 / TLS) (Chlorobium tepidum).